Here is a 372-residue protein sequence, read N- to C-terminus: 4-hydroxy-3-methylbut-2-en-1-yl diphosphate synthase (flavodoxin) (372 aa).

Residues Cys-270, Cys-273, Cys-305, and Glu-312 each contribute to the [4Fe-4S] cluster site.

This sequence belongs to the IspG family. It depends on [4Fe-4S] cluster as a cofactor.

It catalyses the reaction (2E)-4-hydroxy-3-methylbut-2-enyl diphosphate + oxidized [flavodoxin] + H2O + 2 H(+) = 2-C-methyl-D-erythritol 2,4-cyclic diphosphate + reduced [flavodoxin]. The protein operates within isoprenoid biosynthesis; isopentenyl diphosphate biosynthesis via DXP pathway; isopentenyl diphosphate from 1-deoxy-D-xylulose 5-phosphate: step 5/6. In terms of biological role, converts 2C-methyl-D-erythritol 2,4-cyclodiphosphate (ME-2,4cPP) into 1-hydroxy-2-methyl-2-(E)-butenyl 4-diphosphate. The sequence is that of 4-hydroxy-3-methylbut-2-en-1-yl diphosphate synthase (flavodoxin) from Enterobacter sp. (strain 638).